The chain runs to 60 residues: UPF0434 protein SG0997 (60 aa).

The protein belongs to the UPF0434 family.

This chain is UPF0434 protein SG0997, found in Sodalis glossinidius (strain morsitans).